The sequence spans 142 residues: Hemoglobin subunit alpha-A (142 aa).

Positions 2–142 (VLSAADKTNV…VGAVLTAKYR (141 aa)) constitute a Globin domain. His59 provides a ligand contact to O2. Residue His88 participates in heme b binding.

Belongs to the globin family. In terms of assembly, heterotetramer of two alpha chains and two beta chains. As to expression, red blood cells.

Functionally, involved in oxygen transport from the lung to the various peripheral tissues. The polypeptide is Hemoglobin subunit alpha-A (HBAA) (Anas platyrhynchos (Mallard)).